Reading from the N-terminus, the 1317-residue chain is Clustered mitochondria protein homolog (1317 aa).

The region spanning 382–626 (DITRSQESYL…RVTPLDVTWQ (245 aa)) is the Clu domain. Basic and acidic residues predominate over residues 669–689 (KAQEEAANKEQSSEVTESKEQ). Disordered regions lie at residues 669–700 (KAQE…EALD) and 939–966 (ANGV…PSRA). TPR repeat units lie at residues 1040 to 1073 (AKLY…TERT), 1082 to 1115 (ILAY…WKII), and 1124 to 1157 (ITTM…CESL). 2 disordered regions span residues 1252–1273 (VQPQ…ANAS) and 1288–1317 (GGDA…KSSA).

This sequence belongs to the CLU family. May associate with the eukaryotic translation initiation factor 3 (eIF-3) complex.

The protein resides in the cytoplasm. MRNA-binding protein involved in proper cytoplasmic distribution of mitochondria. The polypeptide is Clustered mitochondria protein homolog (Neosartorya fischeri (strain ATCC 1020 / DSM 3700 / CBS 544.65 / FGSC A1164 / JCM 1740 / NRRL 181 / WB 181) (Aspergillus fischerianus)).